Here is a 261-residue protein sequence, read N- to C-terminus: 5'-nucleotidase SurE (261 aa).

Positions 12, 13, 43, and 100 each coordinate a divalent metal cation.

The protein belongs to the SurE nucleotidase family. The cofactor is a divalent metal cation.

It localises to the cytoplasm. The catalysed reaction is a ribonucleoside 5'-phosphate + H2O = a ribonucleoside + phosphate. In terms of biological role, nucleotidase that shows phosphatase activity on nucleoside 5'-monophosphates. The protein is 5'-nucleotidase SurE of Protochlamydia amoebophila (strain UWE25).